The chain runs to 222 residues: Phosphoribosylformylglycinamidine synthase subunit PurQ (222 aa).

Residues 3-222 enclose the Glutamine amidotransferase type-1 domain; that stretch reads AAVLVFPGSN…ASLAAALVAA (220 aa). Residue Cys86 is the Nucleophile of the active site. Catalysis depends on residues His194 and Glu196.

As to quaternary structure, part of the FGAM synthase complex composed of 1 PurL, 1 PurQ and 2 PurS subunits.

It is found in the cytoplasm. The catalysed reaction is N(2)-formyl-N(1)-(5-phospho-beta-D-ribosyl)glycinamide + L-glutamine + ATP + H2O = 2-formamido-N(1)-(5-O-phospho-beta-D-ribosyl)acetamidine + L-glutamate + ADP + phosphate + H(+). It catalyses the reaction L-glutamine + H2O = L-glutamate + NH4(+). It functions in the pathway purine metabolism; IMP biosynthesis via de novo pathway; 5-amino-1-(5-phospho-D-ribosyl)imidazole from N(2)-formyl-N(1)-(5-phospho-D-ribosyl)glycinamide: step 1/2. Part of the phosphoribosylformylglycinamidine synthase complex involved in the purines biosynthetic pathway. Catalyzes the ATP-dependent conversion of formylglycinamide ribonucleotide (FGAR) and glutamine to yield formylglycinamidine ribonucleotide (FGAM) and glutamate. The FGAM synthase complex is composed of three subunits. PurQ produces an ammonia molecule by converting glutamine to glutamate. PurL transfers the ammonia molecule to FGAR to form FGAM in an ATP-dependent manner. PurS interacts with PurQ and PurL and is thought to assist in the transfer of the ammonia molecule from PurQ to PurL. This Jannaschia sp. (strain CCS1) protein is Phosphoribosylformylglycinamidine synthase subunit PurQ.